A 199-amino-acid polypeptide reads, in one-letter code: Recombination protein RecR (199 aa).

The C4-type zinc-finger motif lies at 57–72 (CSICGNITEGDPCSIC). Positions 80–176 (THVLVVEQPK…KVTRLAHGLS (97 aa)) constitute a Toprim domain.

Belongs to the RecR family.

May play a role in DNA repair. It seems to be involved in an RecBC-independent recombinational process of DNA repair. It may act with RecF and RecO. This chain is Recombination protein RecR, found in Levilactobacillus brevis (strain ATCC 367 / BCRC 12310 / CIP 105137 / JCM 1170 / LMG 11437 / NCIMB 947 / NCTC 947) (Lactobacillus brevis).